Reading from the N-terminus, the 169-residue chain is E1B protein, small T-antigen (169 aa).

Belongs to the adenoviridae E1B 19 kDa protein family.

In Canis lupus familiaris (Dog), this protein is E1B protein, small T-antigen.